A 174-amino-acid polypeptide reads, in one-letter code: Adenine phosphoribosyltransferase (174 aa).

This sequence belongs to the purine/pyrimidine phosphoribosyltransferase family. Homodimer.

The protein resides in the cytoplasm. The enzyme catalyses AMP + diphosphate = 5-phospho-alpha-D-ribose 1-diphosphate + adenine. It functions in the pathway purine metabolism; AMP biosynthesis via salvage pathway; AMP from adenine: step 1/1. Catalyzes a salvage reaction resulting in the formation of AMP, that is energically less costly than de novo synthesis. The protein is Adenine phosphoribosyltransferase of Photobacterium profundum (strain SS9).